A 671-amino-acid chain; its full sequence is Zinc finger and BTB domain-containing protein 16-A (671 aa).

The BTB domain maps to 34 to 96; sequence CDVVIMVDSQ…AYTATLQAKV (63 aa). Disordered regions lie at residues 130–167 and 248–289; these read ENDT…TEES and VDES…RSSV. Basic and acidic residues predominate over residues 270-279; the sequence is RSGEPDKNRD. T283 carries the post-translational modification Phosphothreonine. 9 consecutive C2H2-type zinc fingers follow at residues 401–423, 429–451, 458–480, 487–509, 515–537, 544–566, 572–594, 600–622, and 628–650; these read ERCN…RKLH, YGCE…LLSH, IVCD…RQIH, IFCL…MEVH, YICS…LRSH, FECE…KRIH, YECN…YRVH, FECK…LRTH, and YQCT…MKGH.

It belongs to the krueppel C2H2-type zinc-finger protein family. In terms of assembly, interacts with btbd6a (via BTB domain). In terms of processing, polyubiquitinated, leading to its proteasomal degradation. In terms of tissue distribution, during early stages of primary neurogenesis, expressed in the neural epithelium, with highest levels in the forebrain and midbrain. Also expressed in a posterior-to-anterior gradient in the caudal neural plate at the 3-6 somite stage.

It is found in the nucleus. Its subcellular location is the cytoplasm. Its pathway is protein modification; protein ubiquitination. In terms of biological role, probable transcription factor. Probable substrate-recognition component of an E3 ubiquitin-protein ligase complex which mediates the ubiquitination and subsequent proteasomal degradation of target proteins. Inhibits neurogenesis. This is Zinc finger and BTB domain-containing protein 16-A from Danio rerio (Zebrafish).